The following is a 2155-amino-acid chain: Polyketide synthase 2 (2155 aa).

The tract at residues 7 to 244 is N-terminal acylcarrier protein transacylase domain (SAT); it reads FIFGDQTGGF…IPIPIWAPYH (238 aa). The Ketosynthase family 3 (KS3) domain maps to 374–807; it reads DSKIAIIGMS…GGNSALLLED (434 aa). Active-site for beta-ketoacyl synthase activity residues include C546, H681, and H723. The malonyl-CoA:ACP transacylase (MAT) domain stretch occupies residues 908–1213; sequence GFVFSGQGAQ…ASLHRKDDGW (306 aa). S998 acts as the For acyl/malonyl transferase activity in catalysis. Residues 1290 to 1605 form a product template (PT) domain region; it reads TSSVQRIIRQ…RSLLNKVLPP (316 aa). Residues 1294–1428 form an N-terminal hotdog fold region; it reads QRIIRQTDGP…CLLRFADPTS (135 aa). A PKS/mFAS DH domain is found at 1294-1600; the sequence is QRIIRQTDGP…FLGMSRSLLN (307 aa). The active-site Proton acceptor; for dehydratase activity is the H1327. Positions 1455–1600 are C-terminal hotdog fold; that stretch reads TDSLLSKGIV…FLGMSRSLLN (146 aa). Catalysis depends on D1514, which acts as the Proton donor; for dehydratase activity. Residues 1626-1654 are disordered; sequence AASAKDTERRPLDIPTRAQRQPSSPQTGT. Residues 1643 to 1654 are compositionally biased toward polar residues; that stretch reads AQRQPSSPQTGT. The Carrier 1 domain occupies 1649 to 1726; it reads SPQTGTMGRI…ELKAFLGADQ (78 aa). S1686 is subject to O-(pantetheine 4'-phosphoryl)serine. Residues 1735-1765 are disordered; the sequence is SSIGQHTPQTSDKGSGTLASQKTDGDTGPDT. A compositionally biased stretch (polar residues) spans 1736-1756; it reads SIGQHTPQTSDKGSGTLASQK. The region spanning 1764–1838 is the Carrier 2 domain; sequence DTTLNRVCAI…ALQKALCGSE (75 aa). O-(pantetheine 4'-phosphoryl)serine is present on S1798. The thioesterase (TE) domain stretch occupies residues 1873 to 2149; the sequence is ASPPHATSIL…MVEMGNLIGD (277 aa). Residue S1979 is the For thioesterase activity of the active site.

In terms of biological role, polyketide synthase; part of the Pks2 gene cluster that mediates the formation of infectious structures (appressoria), enabling these fungi to kill insects faster. The product of the Pks2 gene cluster is different from the one of Pks1 and has still not been identified. In Metarhizium anisopliae (strain ARSEF 549), this protein is Polyketide synthase 2.